A 528-amino-acid chain; its full sequence is 2-isopropylmalate synthase (528 aa).

The Pyruvate carboxyltransferase domain maps to 12–279 (IRIFDTTLRD…DSSINTPRIV (268 aa)). The Mn(2+) site is built by Asp-21, His-214, His-216, and Asn-250. Positions 401-528 (RLASMTISDV…TTEAPAPATA (128 aa)) are regulatory domain.

The protein belongs to the alpha-IPM synthase/homocitrate synthase family. LeuA type 1 subfamily. In terms of assembly, homodimer. The cofactor is Mn(2+).

It is found in the cytoplasm. It carries out the reaction 3-methyl-2-oxobutanoate + acetyl-CoA + H2O = (2S)-2-isopropylmalate + CoA + H(+). It functions in the pathway amino-acid biosynthesis; L-leucine biosynthesis; L-leucine from 3-methyl-2-oxobutanoate: step 1/4. In terms of biological role, catalyzes the condensation of the acetyl group of acetyl-CoA with 3-methyl-2-oxobutanoate (2-ketoisovalerate) to form 3-carboxy-3-hydroxy-4-methylpentanoate (2-isopropylmalate). This Stenotrophomonas maltophilia (strain R551-3) protein is 2-isopropylmalate synthase.